A 232-amino-acid chain; its full sequence is uncharacterized protein (232 aa).

A disordered region spans residues 119 to 145 (DEEYRENSKAPEAKARPSFVGEGRRLG). Over residues 123-133 (RENSKAPEAKA) the composition is skewed to basic and acidic residues.

This is an uncharacterized protein from Encephalitozoon cuniculi (strain GB-M1) (Microsporidian parasite).